The primary structure comprises 701 residues: Ubiquitin thioesterase zranb1-B (701 aa).

3 consecutive RanBP2-type zinc fingers follow at residues 3–33 (EDGI…PRPS), 79–108 (TSSK…QRRT), and 143–173 (IKGQ…PTPN). Zn(2+)-binding residues include Cys-10, Cys-13, Cys-24, Cys-27, Cys-85, Cys-88, Cys-99, and Cys-102. The segment covering 108–121 (TRSPTESPQSSGSG) has biased composition (polar residues). Residues 108–129 (TRSPTESPQSSGSGLRSIPGPI) form a disordered region. Zn(2+)-binding residues include Cys-150, Cys-153, Cys-164, and Cys-167. The tract at residues 197–220 (RWRGGCSSSNSQRRSPPTSKRDSD) is disordered. Residues 202-214 (CSSSNSQRRSPPT) are compositionally biased toward polar residues. 2 ANK repeats span residues 253 to 283 (RKTD…SGGD) and 306 to 333 (YTLV…QHAA). The OTU domain occupies 425-585 (LYALWNRTAG…RGHFSALVAM (161 aa)). The active-site Nucleophile is the Cys-436. His-578 functions as the Proton acceptor in the catalytic mechanism.

Belongs to the peptidase C64 family.

Its subcellular location is the cytoplasm. It is found in the nucleus. It catalyses the reaction Thiol-dependent hydrolysis of ester, thioester, amide, peptide and isopeptide bonds formed by the C-terminal Gly of ubiquitin (a 76-residue protein attached to proteins as an intracellular targeting signal).. Functionally, ubiquitin thioesterase, which specifically hydrolyzes 'Lys-29'-linked and 'Lys-33'-linked diubiquitin. Also cleaves 'Lys-63'-linked chains, but with 40-fold less efficiency compared to 'Lys-29'-linked ones. Positive regulator of the Wnt signaling pathway that deubiquitinates apc protein, a negative regulator of Wnt-mediated transcription. Acts as a regulator of autophagy by mediating deubiquitination of pik3c3/vps34, thereby promoting autophagosome maturation. Plays a role in the regulation of cell morphology and cytoskeletal organization. Required in the stress fiber dynamics and cell migration. This is Ubiquitin thioesterase zranb1-B (zranb1-b) from Xenopus laevis (African clawed frog).